Reading from the N-terminus, the 113-residue chain is Putative pterin-4-alpha-carbinolamine dehydratase (113 aa).

Belongs to the pterin-4-alpha-carbinolamine dehydratase family.

It carries out the reaction (4aS,6R)-4a-hydroxy-L-erythro-5,6,7,8-tetrahydrobiopterin = (6R)-L-erythro-6,7-dihydrobiopterin + H2O. The protein is Putative pterin-4-alpha-carbinolamine dehydratase of Nitrosomonas eutropha (strain DSM 101675 / C91 / Nm57).